Reading from the N-terminus, the 385-residue chain is Methylthioribose-1-phosphate isomerase (385 aa).

The active-site Proton donor is the aspartate 256.

This sequence belongs to the eIF-2B alpha/beta/delta subunits family. MtnA subfamily.

Its subcellular location is the cytoplasm. It is found in the nucleus. It catalyses the reaction 5-(methylsulfanyl)-alpha-D-ribose 1-phosphate = 5-(methylsulfanyl)-D-ribulose 1-phosphate. It functions in the pathway amino-acid biosynthesis; L-methionine biosynthesis via salvage pathway; L-methionine from S-methyl-5-thio-alpha-D-ribose 1-phosphate: step 1/6. In terms of biological role, catalyzes the interconversion of methylthioribose-1-phosphate (MTR-1-P) into methylthioribulose-1-phosphate (MTRu-1-P). In Arthroderma otae (strain ATCC MYA-4605 / CBS 113480) (Microsporum canis), this protein is Methylthioribose-1-phosphate isomerase.